The primary structure comprises 201 residues: MRLLVGLGNPGAKYQGNRHNIGFMVLDEMARRHGFSPWRRRFQGETADGSIGGERVTLLKPLTYMNDSGRAVQDAASFFKLGLPDITVVHDEIELPAAKLRVKVGGGIAGHNGLRSISAHVGNDYRRVRIGVGHPGAKELVHGHVLNDFAKSERPWVEAMIEAIVEHAGLLVDGRDSTFQNKVHLALQAKGFLDNNDGSAA.

Tyr-14 serves as a coordination point for tRNA. His-19 (proton acceptor) is an active-site residue. Tyr-64, Asn-66, and Asn-112 together coordinate tRNA.

The protein belongs to the PTH family. In terms of assembly, monomer.

It is found in the cytoplasm. The enzyme catalyses an N-acyl-L-alpha-aminoacyl-tRNA + H2O = an N-acyl-L-amino acid + a tRNA + H(+). Its function is as follows. Hydrolyzes ribosome-free peptidyl-tRNAs (with 1 or more amino acids incorporated), which drop off the ribosome during protein synthesis, or as a result of ribosome stalling. Functionally, catalyzes the release of premature peptidyl moieties from peptidyl-tRNA molecules trapped in stalled 50S ribosomal subunits, and thus maintains levels of free tRNAs and 50S ribosomes. This Rhodopseudomonas palustris (strain BisB18) protein is Peptidyl-tRNA hydrolase.